The primary structure comprises 134 residues: Cytochrome c-type biogenesis protein CcmE (134 aa).

Residues Met1–Arg7 lie on the Cytoplasmic side of the membrane. The helical; Signal-anchor for type II membrane protein transmembrane segment at Leu8–Lys28 threads the bilayer. Residues Leu29–Leu134 are Periplasmic-facing. His120 and Tyr124 together coordinate heme.

The protein belongs to the CcmE/CycJ family.

Its subcellular location is the cell inner membrane. In terms of biological role, heme chaperone required for the biogenesis of c-type cytochromes. Transiently binds heme delivered by CcmC and transfers the heme to apo-cytochromes in a process facilitated by CcmF and CcmH. In Ehrlichia ruminantium (strain Welgevonden), this protein is Cytochrome c-type biogenesis protein CcmE.